Reading from the N-terminus, the 767-residue chain is Lysyl oxidase homolog 2 (767 aa).

Positions 1-19 (MLVTHIFLLTLSLSVPTLG) are cleaved as a signal peptide. SRCR domains follow at residues 51–152 (VRLA…VQCS), 181–295 (IRAI…VSCT), 319–418 (VRLR…VRCN), and 428–537 (VRLS…VSCV). 9 disulfide bridges follow: cysteine 77-cysteine 141, cysteine 90-cysteine 151, cysteine 121-cysteine 131, cysteine 211-cysteine 284, cysteine 224-cysteine 294, cysteine 258-cysteine 268, cysteine 344-cysteine 407, cysteine 357-cysteine 417, and cysteine 388-cysteine 398. Asparagine 281 carries an N-linked (GlcNAc...) asparagine glycan. N-linked (GlcNAc...) asparagine glycosylation occurs at asparagine 448. Intrachain disulfides connect cysteine 457-cysteine 523, cysteine 470-cysteine 536, and cysteine 504-cysteine 514. The tract at residues 541–744 (PDLVLNAALV…WMYNCHIGGS (204 aa)) is lysyl-oxidase like. Ca(2+) is bound by residues aspartate 542 and leucine 543. 4 disulfides stabilise this stretch: cysteine 566–cysteine 618, cysteine 572–cysteine 688, cysteine 650–cysteine 666, and cysteine 656–cysteine 678. Cu cation contacts are provided by histidine 619, histidine 621, and histidine 623. N-linked (GlcNAc...) asparagine glycosylation is present at asparagine 637. Residues 646-682 (KASFCLEDSECETDVQKQYACANFGEQGITVGCWDVY) constitute a cross-link (lysine tyrosylquinone (Lys-Tyr)). At tyrosine 682 the chain carries 2',4',5'-topaquinone. Ca(2+)-binding residues include glutamate 715, aspartate 717, asparagine 720, and asparagine 721. Cysteines 725 and 739 form a disulfide.

It belongs to the lysyl oxidase family. Cu cation serves as cofactor. Requires lysine tyrosylquinone residue as cofactor. Post-translationally, the lysine tyrosylquinone cross-link (LTQ) is generated by condensation of the epsilon-amino group of a lysine with a topaquinone produced by oxidation of tyrosine.

It localises to the secreted. The protein resides in the extracellular space. The protein localises to the extracellular matrix. It is found in the basement membrane. Its subcellular location is the nucleus. It localises to the chromosome. The protein resides in the endoplasmic reticulum. It carries out the reaction L-lysyl-[protein] + O2 + H2O = (S)-2-amino-6-oxohexanoyl-[protein] + H2O2 + NH4(+). In terms of biological role, mediates the post-translational oxidative deamination of lysine residues on target proteins leading to the formation of deaminated lysine (allysine). Acts as a transcription corepressor and specifically mediates deamination of trimethylated 'Lys-4' of histone H3 (H3K4me3), a specific tag for epigenetic transcriptional activation. Shows no activity against histone H3 when it is trimethylated on 'Lys-9' (H3K9me3) or 'Lys-27' (H3K27me3) or when 'Lys-4' is monomethylated (H3K4me1) or dimethylated (H3K4me2). Also mediates deamination of methylated TAF10, a member of the transcription factor IID (TFIID) complex, which induces release of TAF10 from promoters, leading to inhibition of TFIID-dependent transcription. LOXL2-mediated deamination of TAF10 results in transcriptional repression of genes required for embryonic stem cell pluripotency. Involved in epithelial to mesenchymal transition (EMT) and participates in repression of E-cadherin, probably by mediating deamination of histone H3. When secreted into the extracellular matrix, promotes cross-linking of extracellular matrix proteins by mediating oxidative deamination of peptidyl lysine residues in precursors to fibrous collagen and elastin. Acts as a regulator of sprouting angiogenesis, probably via collagen IV scaffolding. Acts as a regulator of chondrocyte differentiation, probably by regulating expression of factors that control chondrocyte differentiation. The chain is Lysyl oxidase homolog 2 (loxl2) from Xenopus tropicalis (Western clawed frog).